We begin with the raw amino-acid sequence, 163 residues long: SKP1-like protein 4 (163 aa).

An interaction with the F-box domain of F-box proteins region spans residues I105–E163.

This sequence belongs to the SKP1 family. Part of a SCF (SKP1-cullin-F-box) protein ligase complex. Interacts with At1g56610, At1g67340, At3g62230, At3g59000, At4g27050, At1g55000, SKIP16 and SKIP32. Mostly expressed in inflorescence and siliques, and, to a lower extent, in seedlings, roots, and stems.

Its subcellular location is the nucleus. Its pathway is protein modification; protein ubiquitination. Functionally, involved in ubiquitination and subsequent proteasomal degradation of target proteins. Together with CUL1, RBX1 and a F-box protein, it forms a SCF E3 ubiquitin ligase complex. The functional specificity of this complex depends on the type of F-box protein. In the SCF complex, it serves as an adapter that links the F-box protein to CUL1. The polypeptide is SKP1-like protein 4 (ASK4) (Arabidopsis thaliana (Mouse-ear cress)).